Consider the following 289-residue polypeptide: UPF0276 protein BP2925 (289 aa).

It belongs to the UPF0276 family.

The polypeptide is UPF0276 protein BP2925 (Bordetella pertussis (strain Tohama I / ATCC BAA-589 / NCTC 13251)).